Consider the following 159-residue polypeptide: Phosphopantetheine adenylyltransferase (159 aa).

Residue threonine 10 participates in substrate binding. ATP-binding positions include 10 to 11 and histidine 18; that span reads TF. Substrate contacts are provided by lysine 42, methionine 74, and arginine 88. Residues 89-91, glutamate 99, and 124-130 each bind ATP; these read GLR and WSFISSS.

This sequence belongs to the bacterial CoaD family. Homohexamer. The cofactor is Mg(2+).

It is found in the cytoplasm. It carries out the reaction (R)-4'-phosphopantetheine + ATP + H(+) = 3'-dephospho-CoA + diphosphate. The protein operates within cofactor biosynthesis; coenzyme A biosynthesis; CoA from (R)-pantothenate: step 4/5. In terms of biological role, reversibly transfers an adenylyl group from ATP to 4'-phosphopantetheine, yielding dephospho-CoA (dPCoA) and pyrophosphate. This is Phosphopantetheine adenylyltransferase from Enterobacter sp. (strain 638).